We begin with the raw amino-acid sequence, 249 residues long: Probable septum site-determining protein MinC (249 aa).

The interval alanine 116–alanine 149 is disordered. Pro residues predominate over residues serine 119–arginine 130. The segment covering alanine 131 to proline 142 has biased composition (low complexity).

Belongs to the MinC family. As to quaternary structure, interacts with MinD and FtsZ.

In terms of biological role, cell division inhibitor that blocks the formation of polar Z ring septums. Rapidly oscillates between the poles of the cell to destabilize FtsZ filaments that have formed before they mature into polar Z rings. Prevents FtsZ polymerization. This Xanthomonas campestris pv. campestris (strain B100) protein is Probable septum site-determining protein MinC.